Here is a 697-residue protein sequence, read N- to C-terminus: Elongation factor G (697 aa).

Residues 8–290 (ERYRNFGIMA…AVVDYLPSPL (283 aa)) enclose the tr-type G domain. GTP contacts are provided by residues 17 to 24 (AHIDAGKT), 88 to 92 (DTPGH), and 142 to 145 (NKLD).

This sequence belongs to the TRAFAC class translation factor GTPase superfamily. Classic translation factor GTPase family. EF-G/EF-2 subfamily.

The protein resides in the cytoplasm. In terms of biological role, catalyzes the GTP-dependent ribosomal translocation step during translation elongation. During this step, the ribosome changes from the pre-translocational (PRE) to the post-translocational (POST) state as the newly formed A-site-bound peptidyl-tRNA and P-site-bound deacylated tRNA move to the P and E sites, respectively. Catalyzes the coordinated movement of the two tRNA molecules, the mRNA and conformational changes in the ribosome. In Sphingopyxis alaskensis (strain DSM 13593 / LMG 18877 / RB2256) (Sphingomonas alaskensis), this protein is Elongation factor G.